The chain runs to 377 residues: Succinyl-diaminopimelate desuccinylase (377 aa).

H68 is a binding site for Zn(2+). The active site involves D70. Residue D101 participates in Zn(2+) binding. Catalysis depends on E135, which acts as the Proton acceptor. Zn(2+) contacts are provided by E136, E164, and H350.

It belongs to the peptidase M20A family. DapE subfamily. As to quaternary structure, homodimer. Requires Zn(2+) as cofactor. The cofactor is Co(2+).

It carries out the reaction N-succinyl-(2S,6S)-2,6-diaminopimelate + H2O = (2S,6S)-2,6-diaminopimelate + succinate. The protein operates within amino-acid biosynthesis; L-lysine biosynthesis via DAP pathway; LL-2,6-diaminopimelate from (S)-tetrahydrodipicolinate (succinylase route): step 3/3. In terms of biological role, catalyzes the hydrolysis of N-succinyl-L,L-diaminopimelic acid (SDAP), forming succinate and LL-2,6-diaminopimelate (DAP), an intermediate involved in the bacterial biosynthesis of lysine and meso-diaminopimelic acid, an essential component of bacterial cell walls. The sequence is that of Succinyl-diaminopimelate desuccinylase from Aliivibrio fischeri (strain MJ11) (Vibrio fischeri).